The chain runs to 441 residues: Queuine tRNA-ribosyltransferase accessory subunit 2 (441 aa).

C307, C309, C312, and H338 together coordinate Zn(2+).

Belongs to the queuine tRNA-ribosyltransferase family. QTRT2 subfamily. Heterodimer of a catalytic subunit and an accessory subunit. It depends on Zn(2+) as a cofactor.

Its subcellular location is the cytoplasm. Its function is as follows. Non-catalytic subunit of the queuine tRNA-ribosyltransferase (TGT) that catalyzes the base-exchange of a guanine (G) residue with queuine (Q) at position 34 (anticodon wobble position) in tRNAs with GU(N) anticodons (tRNA-Asp, -Asn, -His and -Tyr), resulting in the hypermodified nucleoside queuosine (7-(((4,5-cis-dihydroxy-2-cyclopenten-1-yl)amino)methyl)-7-deazaguanosine). This is Queuine tRNA-ribosyltransferase accessory subunit 2 (qtr2) from Schizosaccharomyces pombe (strain 972 / ATCC 24843) (Fission yeast).